Consider the following 483-residue polypeptide: Altronate oxidoreductase (483 aa).

NAD(+) is bound at residue 18–29 (IIQFGEGNFLRA).

It belongs to the mannitol dehydrogenase family. UxaB subfamily.

The catalysed reaction is D-altronate + NAD(+) = keto-D-tagaturonate + NADH + H(+). Its pathway is carbohydrate metabolism; pentose and glucuronate interconversion. The protein is Altronate oxidoreductase (uxaB) of Escherichia coli O157:H7.